A 354-amino-acid chain; its full sequence is MCQSPLHDFLHGLPKCEHHVHLEGCVTPELIFQLAEKNNIQLPNPATHPAYASVEALRARYAEFTSLNDFLDFYFHGMSVLHHQSDFEELAWAYFQKAHADGVHHAEVFFDPQVHQARGIDYETVVSGFTAGCKRAERELGLSTRLILCFVRHLPVDSATKLYELALASNHFESRVVHGLGWSSSEVGPPKDMFREIYASASGKGIRLTAHAGEEGDPTYISTALELGARRIDHGIRLVEDPELMERVAREGIMLTVCPLSNVRLRCVQSVEQVPIRKFLDAGVKFSINSDDPAYFGGYILDNYCAVQEAFQLSILEWRVIAENSVNESWIDEARKAELLKRIDDHVQKHTVVA.

3 residues coordinate Zn(2+): His-19, His-21, and His-211. The Proton donor role is filled by Glu-214. Asp-291 serves as a coordination point for Zn(2+). Asp-292 is a substrate binding site.

Belongs to the metallo-dependent hydrolases superfamily. Adenosine and AMP deaminases family. Adenine deaminase type 2 subfamily. The cofactor is Zn(2+).

The protein resides in the cytoplasm. Its subcellular location is the nucleus. It catalyses the reaction adenine + H2O + H(+) = hypoxanthine + NH4(+). Functionally, catalyzes the hydrolytic deamination of adenine to hypoxanthine. Plays an important role in the purine salvage pathway and in nitrogen catabolism. This is Adenine deaminase (aah1) from Aspergillus fumigatus (strain ATCC MYA-4609 / CBS 101355 / FGSC A1100 / Af293) (Neosartorya fumigata).